A 479-amino-acid polypeptide reads, in one-letter code: F-box/LRR-repeat protein 16 (479 aa).

Residues 1 to 92 (MSSPGIDGDP…GPVSGPPVER (92 aa)) form a disordered region. A compositionally biased stretch (pro residues) spans 47-60 (CQPPPPPTLPPPSL). An Omega-N-methylarginine modification is found at R92. The 46-residue stretch at 94-139 (PLATDEKILNGLFWYFSACEKCILAQVCKAWRRVLYQPKFWAGLTP) folds into the F-box domain. 6 LRR repeats span residues 321–342 (NLTSLSLSGCSKVTDDGVELVA), 347–369 (KLRSLDLSWCPRITDMALEYVAC), 373–394 (RLEELVLDRCVRITDTGLSYLS), 398–419 (SLRSLYLRWCCQVQDFGLKHLL), 423–444 (NLRLLSLAGCPLLTTTGLSGLV), and 446–470 (LQELEELELTNCPGATPELFKYFSQ).

In terms of assembly, interacts with SKP1 and CUL1.

Functionally, substrate-recognition component of the SCF (SKP1-CUL1-F-box protein)-type E3 ubiquitin ligase complex. In Mus musculus (Mouse), this protein is F-box/LRR-repeat protein 16 (Fbxl16).